A 2024-amino-acid chain; its full sequence is Pericentriolar material 1 protein (2024 aa).

The segment at methionine 1–methionine 92 is disordered. Alanine 2 bears the N-acetylalanine mark. The tract at residues alanine 2–threonine 1460 is mediates interaction with DZIP1. Residues arginine 43 to threonine 61 are compositionally biased toward basic and acidic residues. 7 positions are modified to phosphoserine: serine 65, serine 68, serine 69, serine 93, serine 110, serine 116, and serine 119. Residues aspartate 111 to arginine 163 form a disordered region. 2 stretches are compositionally biased toward polar residues: residues serine 116–arginine 132 and glutamine 147–arginine 163. A Phosphoserine; in variant Ser-159 modification is found at asparagine 159. Residues lysine 218 to alanine 301 are a coiled coil. The disordered stretch occupies residues arginine 354 to glutamate 392. The span at glutamate 369 to proline 383 shows a compositional bias: polar residues. Serine 370 bears the Phosphoserine mark. A Phosphoserine; by PLK4 modification is found at serine 372. Serine 384 is subject to Phosphoserine. At lysine 399 the chain carries N6-acetyllysine. Positions methionine 400–histidine 424 form a coiled coil. Disordered regions lie at residues arginine 421–lysine 492 and glutamate 523–isoleucine 548. Polar residues-rich tracts occupy residues leucine 425–serine 445 and glycine 456–glutamate 477. A coiled-coil region spans residues serine 487–glutamate 543. At serine 588 the chain carries Phosphoserine. Disordered regions lie at residues histidine 614–aspartate 652 and phenylalanine 699–valine 726. Residues glycine 618–glycine 632 show a composition bias toward acidic residues. Residues serine 634–serine 643 show a composition bias toward low complexity. At serine 643 the chain carries Phosphoserine. Residues glutamate 651–aspartate 682 adopt a coiled-coil conformation. The segment covering glutamine 708 to lysine 719 has biased composition (polar residues). 2 coiled-coil regions span residues valine 726 to alanine 769 and serine 824 to glutamate 858. Threonine 859 is subject to Phosphothreonine. A phosphoserine mark is found at serine 861, serine 866, serine 869, and serine 872. A Phosphothreonine modification is found at threonine 877. The interval threonine 915–lysine 947 is disordered. The segment covering alanine 925–glycine 946 has biased composition (polar residues). 4 positions are modified to phosphoserine: serine 960, serine 977, serine 988, and serine 991. Residues threonine 1063–histidine 1089 adopt a coiled-coil conformation. Disordered regions lie at residues glutamine 1085–serine 1109 and phenylalanine 1152–tryptophan 1211. Positions histidine 1089 to glycine 1099 are enriched in basic and acidic residues. The span at phenylalanine 1152–lysine 1173 shows a compositional bias: polar residues. Phosphoserine occurs at positions 1185 and 1188. Positions glutamate 1192–glutamate 1201 are enriched in basic and acidic residues. A phosphoserine mark is found at serine 1229 and serine 1231. Residues valine 1232–threonine 1246 show a composition bias toward polar residues. The tract at residues valine 1232–valine 1342 is disordered. Serine 1257, serine 1260, serine 1262, and serine 1263 each carry phosphoserine. The interval threonine 1279–glycine 1799 is interaction with HAP1. The span at lysine 1296–asparagine 1313 shows a compositional bias: basic residues. 2 positions are modified to phosphoserine: serine 1318 and serine 1320. Position 1468 is a phosphothreonine (threonine 1468). Residues isoleucine 1515–asparagine 1539 adopt a coiled-coil conformation. Residues serine 1573, serine 1697, serine 1730, serine 1765, serine 1768, serine 1776, and serine 1782 each carry the phosphoserine modification. 2 disordered regions span residues leucine 1725–proline 1868 and glutamate 1880–valine 1944. The span at serine 1768–glutamate 1777 shows a compositional bias: acidic residues. The segment covering isoleucine 1783–glycine 1797 has biased composition (polar residues). A compositionally biased stretch (acidic residues) spans glycine 1799–proline 1815. A compositionally biased stretch (polar residues) spans valine 1818–glutamate 1827. Residues aspartate 1835–serine 1860 are compositionally biased toward basic and acidic residues. Positions proline 1905–proline 1916 are enriched in low complexity. The interval proline 1913–isoleucine 2024 is interaction with BBS4. Polar residues predominate over residues alanine 1924–alanine 1933. Residues serine 1958 and serine 1977 each carry the phosphoserine modification. Positions glutamate 2005–isoleucine 2024 are disordered.

The protein belongs to the PCM1 family. As to quaternary structure, self-associates. Interacts with C2CD3. Interacts with BBS4, BBS8, CETN3, HAP1, NDE1, NDEL1, MAP1LC3B, GABARAPAL2, and GABARAP. Interacts with CEP131; the interaction increases in response to ultraviolet light (UV) radiation. Associates with microtubule; association to microtubule is reduced in response to cellular stress, such as ultraviolet light (UV) radiation or heat shock, in a process that requires p38 MAP kinase signaling. Interacts with CFAP263. Interacts with SSX2IP. Interacts with CCDC13. Interacts with CEP290. Interacts with PARD6A. Interacts with KIAA0753/OFIP, CEP20/FOR20 and OFD1; the interaction with CEP20/FOR20 and OFD1 may be mediated by KIAA0753/OFIP. Interacts with CCDC66. Interacts with CCDC61. Interacts with DZIP1; localizes DZIP1 and the associated BBSome to centriolar satellite. Interacts with CSTPP1, TTLL1, TPGS1 and LRRC49. Interacts with CFAP53. Ubiquitinated. Undergoes monoubiquitination catalyzed by the E3 ubiquitin-protein ligase MIB1 in proliferating cells, preventing cilia formation. Monoubiquitination by MIB1 is inhibited in response to cellular stress, such as ultraviolet light (UV) radiation or heat shock, resulting in cilia formation initiation. In terms of processing, variant Ser-159 is phosphorylated. Post-translationally, phosphorylated on multiple serine and threonine residues by DYRK3 during the G2-to-M transition, after the nuclear-envelope breakdown. Phosphorylation by DYRK3 promotes disassembly of pericentriolar material. Phosphorylation at Ser-372 mediated by PLK4 is required to maintain the integrity of centriolar satellites. Expressed in blood, bone marrow, breast, lymph node, ovary and thyroid.

It is found in the cytoplasm. It localises to the cytoskeleton. The protein localises to the microtubule organizing center. The protein resides in the centrosome. Its subcellular location is the cytoplasmic granule. It is found in the centriolar satellite. It localises to the cilium basal body. Required for centrosome assembly and function. Essential for the correct localization of several centrosomal proteins including CEP250, CETN3, PCNT and NEK2. Required to anchor microtubules to the centrosome. Also involved in cilium biogenesis by recruiting the BBSome, a ciliary protein complex involved in cilium biogenesis, to the centriolar satellites. Recruits the tubulin polyglutamylase complex (TPGC) to centriolar satellites. This chain is Pericentriolar material 1 protein, found in Homo sapiens (Human).